A 597-amino-acid chain; its full sequence is Chaperonin 60 subunit beta 3, chloroplastic (597 aa).

Positions 1 to 20 (MASTFSATSSMGSSLAPPSN) are disordered. The N-terminal 29 residues, 1–29 (MASTFSATSSMGSSLAPPSNRLSSFVSIS), are a transit peptide targeting the chloroplast. 2 positions are modified to phosphoserine: Ser-97 and Ser-474. Residues 387–489 (STEEVVKKRV…KETLANDEEK (103 aa)) are a coiled coil.

It belongs to the chaperonin (HSP60) family. Part of the Cpn60 complex composed of 7 alpha and 7 beta subunits. Can also form a complex composed of 14 beta subunits only. Both complexes show ATPase activity. The Cpn60 complex interacts with the Cpn10 complex.

Its subcellular location is the plastid. The protein localises to the chloroplast. Its function is as follows. Involved in protein assisted folding. This chain is Chaperonin 60 subunit beta 3, chloroplastic (CPN60B3), found in Arabidopsis thaliana (Mouse-ear cress).